The following is a 397-amino-acid chain: Histidinol-phosphate aminotransferase (397 aa).

An N6-(pyridoxal phosphate)lysine modification is found at K247.

Belongs to the class-II pyridoxal-phosphate-dependent aminotransferase family. Histidinol-phosphate aminotransferase subfamily. As to quaternary structure, homodimer. Requires pyridoxal 5'-phosphate as cofactor.

The enzyme catalyses L-histidinol phosphate + 2-oxoglutarate = 3-(imidazol-4-yl)-2-oxopropyl phosphate + L-glutamate. It functions in the pathway amino-acid biosynthesis; L-histidine biosynthesis; L-histidine from 5-phospho-alpha-D-ribose 1-diphosphate: step 7/9. The protein is Histidinol-phosphate aminotransferase of Frankia casuarinae (strain DSM 45818 / CECT 9043 / HFP020203 / CcI3).